The primary structure comprises 132 residues: MAAGMKAKRSRRRKERKNVEHGCAHIKSTFNNSIVTITDSVGNTLSWASAGGLGFRGSRKSTPFAAQMAAETAAKAAMEHGLKSIEVYVKGPGSGREAAIRSLQAAGLEVTLIKDVTPIPHNGCRPPKRRRV.

The protein belongs to the universal ribosomal protein uS11 family. Part of the 30S ribosomal subunit. Interacts with proteins S7 and S18. Binds to IF-3.

In terms of biological role, located on the platform of the 30S subunit, it bridges several disparate RNA helices of the 16S rRNA. Forms part of the Shine-Dalgarno cleft in the 70S ribosome. This is Small ribosomal subunit protein uS11 from Clostridium botulinum (strain 657 / Type Ba4).